The following is a 136-amino-acid chain: Transcription antitermination protein NusB (136 aa).

Belongs to the NusB family.

In terms of biological role, involved in transcription antitermination. Required for transcription of ribosomal RNA (rRNA) genes. Binds specifically to the boxA antiterminator sequence of the ribosomal RNA (rrn) operons. The chain is Transcription antitermination protein NusB from Paenarthrobacter aurescens (strain TC1).